The following is a 122-amino-acid chain: Large ribosomal subunit protein uL14 (122 aa).

This sequence belongs to the universal ribosomal protein uL14 family. As to quaternary structure, part of the 50S ribosomal subunit. Forms a cluster with proteins L3 and L19. In the 70S ribosome, L14 and L19 interact and together make contacts with the 16S rRNA in bridges B5 and B8.

In terms of biological role, binds to 23S rRNA. Forms part of two intersubunit bridges in the 70S ribosome. This chain is Large ribosomal subunit protein uL14, found in Rickettsia canadensis (strain McKiel).